The sequence spans 449 residues: Phosphoglucosamine mutase (449 aa).

The active-site Phosphoserine intermediate is Ser105. Positions 105, 242, 244, and 246 each coordinate Mg(2+). Ser105 carries the phosphoserine modification.

It belongs to the phosphohexose mutase family. Requires Mg(2+) as cofactor. In terms of processing, activated by phosphorylation.

It catalyses the reaction alpha-D-glucosamine 1-phosphate = D-glucosamine 6-phosphate. Its function is as follows. Catalyzes the conversion of glucosamine-6-phosphate to glucosamine-1-phosphate. The sequence is that of Phosphoglucosamine mutase from Clavibacter sepedonicus (Clavibacter michiganensis subsp. sepedonicus).